The primary structure comprises 312 residues: Glycerol-3-phosphate dehydrogenase [NAD(P)+] (312 aa).

NADPH-binding residues include Trp11, Arg30, Arg31, and Lys95. Sn-glycerol 3-phosphate-binding residues include Lys95, Gly123, and Ser125. Ala127 is a binding site for NADPH. Sn-glycerol 3-phosphate contacts are provided by Lys177, Asp230, Ser240, Arg241, and Asn242. Residue Lys177 is the Proton acceptor of the active site. Position 241 (Arg241) interacts with NADPH. Residues Val265 and Glu267 each coordinate NADPH.

Belongs to the NAD-dependent glycerol-3-phosphate dehydrogenase family.

It is found in the cytoplasm. It catalyses the reaction sn-glycerol 3-phosphate + NAD(+) = dihydroxyacetone phosphate + NADH + H(+). It carries out the reaction sn-glycerol 3-phosphate + NADP(+) = dihydroxyacetone phosphate + NADPH + H(+). The protein operates within membrane lipid metabolism; glycerophospholipid metabolism. Functionally, catalyzes the reduction of the glycolytic intermediate dihydroxyacetone phosphate (DHAP) to sn-glycerol 3-phosphate (G3P), the key precursor for phospholipid synthesis. The sequence is that of Glycerol-3-phosphate dehydrogenase [NAD(P)+] from Helicobacter pylori (strain P12).